A 164-amino-acid polypeptide reads, in one-letter code: Transcription elongation factor GreA (164 aa).

It belongs to the GreA/GreB family.

In terms of biological role, necessary for efficient RNA polymerase transcription elongation past template-encoded arresting sites. The arresting sites in DNA have the property of trapping a certain fraction of elongating RNA polymerases that pass through, resulting in locked ternary complexes. Cleavage of the nascent transcript by cleavage factors such as GreA or GreB allows the resumption of elongation from the new 3'terminus. GreA releases sequences of 2 to 3 nucleotides. This chain is Transcription elongation factor GreA, found in Helicobacter pylori (strain P12).